Consider the following 325-residue polypeptide: GMP reductase (325 aa).

Residue Cys-174 is the Thioimidate intermediate of the active site. An NADP(+)-binding site is contributed by 203-226 (IIADGGIRTHGDIAKSVRFGATMV).

It belongs to the IMPDH/GMPR family. GuaC type 2 subfamily.

The enzyme catalyses IMP + NH4(+) + NADP(+) = GMP + NADPH + 2 H(+). Its function is as follows. Catalyzes the irreversible NADPH-dependent deamination of GMP to IMP. It functions in the conversion of nucleobase, nucleoside and nucleotide derivatives of G to A nucleotides, and in maintaining the intracellular balance of A and G nucleotides. The protein is GMP reductase of Enterococcus faecalis (strain ATCC 700802 / V583).